The chain runs to 290 residues: S-methyl-5'-thioadenosine phosphorylase (290 aa).

Phosphate-binding positions include Ser11, 53 to 54 (RH), and 86 to 87 (SA). Met184 contributes to the substrate binding site. Thr185 serves as a coordination point for phosphate. Residue 208–210 (DYD) coordinates substrate.

The protein belongs to the PNP/MTAP phosphorylase family. MTAP subfamily. Homohexamer. Dimer of a homotrimer.

The catalysed reaction is S-methyl-5'-thioadenosine + phosphate = 5-(methylsulfanyl)-alpha-D-ribose 1-phosphate + adenine. It participates in amino-acid biosynthesis; L-methionine biosynthesis via salvage pathway; S-methyl-5-thio-alpha-D-ribose 1-phosphate from S-methyl-5'-thioadenosine (phosphorylase route): step 1/1. Functionally, catalyzes the reversible phosphorylation of S-methyl-5'-thioadenosine (MTA) to adenine and 5-methylthioribose-1-phosphate. Involved in the breakdown of MTA, a major by-product of polyamine biosynthesis. Responsible for the first step in the methionine salvage pathway after MTA has been generated from S-adenosylmethionine. Has broad substrate specificity with 6-aminopurine nucleosides as preferred substrates. In Cereibacter sphaeroides (strain ATCC 17023 / DSM 158 / JCM 6121 / CCUG 31486 / LMG 2827 / NBRC 12203 / NCIMB 8253 / ATH 2.4.1.) (Rhodobacter sphaeroides), this protein is S-methyl-5'-thioadenosine phosphorylase.